The chain runs to 178 residues: GTP-dependent dephospho-CoA kinase (178 aa).

Residues Asp48, Ile49, Asp67, Lys69, and Glu126 each coordinate GTP.

This sequence belongs to the GTP-dependent DPCK family.

It catalyses the reaction 3'-dephospho-CoA + GTP = GDP + CoA + H(+). Its pathway is cofactor biosynthesis; coenzyme A biosynthesis. Its function is as follows. Catalyzes the GTP-dependent phosphorylation of the 3'-hydroxyl group of dephosphocoenzyme A to form coenzyme A (CoA). The protein is GTP-dependent dephospho-CoA kinase of Methanothrix thermoacetophila (strain DSM 6194 / JCM 14653 / NBRC 101360 / PT) (Methanosaeta thermophila).